Consider the following 354-residue polypeptide: Probable cinnamyl alcohol dehydrogenase 1 (354 aa).

C47 serves as a coordination point for Zn(2+). Residue S49 coordinates NADP(+). Zn(2+) is bound by residues H69, E70, C100, C103, C106, C114, and C163. Residues T167, 188 to 193 (GLGGVG), 211 to 216 (SSSDKK), T251, G275, and 296 to 298 (SFI) each bind NADP(+).

The protein belongs to the zinc-containing alcohol dehydrogenase family. Homodimer. Zn(2+) serves as cofactor.

The enzyme catalyses (E)-cinnamyl alcohol + NADP(+) = (E)-cinnamaldehyde + NADPH + H(+). The catalysed reaction is (E)-coniferol + NADP(+) = (E)-coniferaldehyde + NADPH + H(+). It carries out the reaction (E)-sinapyl alcohol + NADP(+) = (E)-sinapaldehyde + NADPH + H(+). It catalyses the reaction (E)-4-coumaroyl alcohol + NADP(+) = (E)-4-coumaraldehyde + NADPH + H(+). The enzyme catalyses (E)-caffeyl alcohol + NADP(+) = (E)-caffeyl aldehyde + NADPH + H(+). It participates in aromatic compound metabolism; phenylpropanoid biosynthesis. Its function is as follows. Involved in lignin biosynthesis. Catalyzes the final step specific for the production of lignin monomers. Catalyzes the NADPH-dependent reduction of coniferaldehyde, 5-hydroxyconiferaldehyde, sinapaldehyde, 4-coumaraldehyde and caffeyl aldehyde to their respective alcohols. The sequence is that of Probable cinnamyl alcohol dehydrogenase 1 (CAD1) from Eucalyptus gunnii (Cider gum).